A 335-amino-acid chain; its full sequence is Transaldolase (335 aa).

Ser-2 bears the N-acetylserine mark. Lys-144 serves as the catalytic Schiff-base intermediate with substrate.

Belongs to the transaldolase family. Type 1 subfamily. As to quaternary structure, homodimer.

The enzyme catalyses D-sedoheptulose 7-phosphate + D-glyceraldehyde 3-phosphate = D-erythrose 4-phosphate + beta-D-fructose 6-phosphate. The protein operates within carbohydrate degradation; pentose phosphate pathway; D-glyceraldehyde 3-phosphate and beta-D-fructose 6-phosphate from D-ribose 5-phosphate and D-xylulose 5-phosphate (non-oxidative stage): step 2/3. Its function is as follows. Transaldolase is important for the balance of metabolites in the pentose-phosphate pathway. This is Transaldolase (TAL1) from Saccharomyces cerevisiae (strain ATCC 204508 / S288c) (Baker's yeast).